Here is an 83-residue protein sequence, read N- to C-terminus: Exodeoxyribonuclease 7 small subunit (83 aa).

Belongs to the XseB family. In terms of assembly, heterooligomer composed of large and small subunits.

The protein resides in the cytoplasm. The catalysed reaction is Exonucleolytic cleavage in either 5'- to 3'- or 3'- to 5'-direction to yield nucleoside 5'-phosphates.. Its function is as follows. Bidirectionally degrades single-stranded DNA into large acid-insoluble oligonucleotides, which are then degraded further into small acid-soluble oligonucleotides. The protein is Exodeoxyribonuclease 7 small subunit of Nitrobacter winogradskyi (strain ATCC 25391 / DSM 10237 / CIP 104748 / NCIMB 11846 / Nb-255).